Here is an 81-residue protein sequence, read N- to C-terminus: Translational regulator CsrA (81 aa).

This sequence belongs to the CsrA/RsmA family. Homodimer; the beta-strands of each monomer intercalate to form a hydrophobic core, while the alpha-helices form wings that extend away from the core.

The protein localises to the cytoplasm. Its function is as follows. A translational regulator that binds mRNA to regulate translation initiation and/or mRNA stability. Usually binds in the 5'-UTR at or near the Shine-Dalgarno sequence preventing ribosome-binding, thus repressing translation. Its main target seems to be the major flagellin gene, while its function is anatagonized by FliW. The polypeptide is Translational regulator CsrA (Halothermothrix orenii (strain H 168 / OCM 544 / DSM 9562)).